Here is a 268-residue protein sequence, read N- to C-terminus: Ribosomal RNA small subunit methyltransferase A (268 aa).

Residues N18, L20, G45, E66, D91, and N112 each coordinate S-adenosyl-L-methionine.

Belongs to the class I-like SAM-binding methyltransferase superfamily. rRNA adenine N(6)-methyltransferase family. RsmA subfamily.

It is found in the cytoplasm. It catalyses the reaction adenosine(1518)/adenosine(1519) in 16S rRNA + 4 S-adenosyl-L-methionine = N(6)-dimethyladenosine(1518)/N(6)-dimethyladenosine(1519) in 16S rRNA + 4 S-adenosyl-L-homocysteine + 4 H(+). In terms of biological role, specifically dimethylates two adjacent adenosines (A1518 and A1519) in the loop of a conserved hairpin near the 3'-end of 16S rRNA in the 30S particle. May play a critical role in biogenesis of 30S subunits. The chain is Ribosomal RNA small subunit methyltransferase A from Shewanella baltica (strain OS185).